A 445-amino-acid chain; its full sequence is Na(+)-translocating NADH-quinone reductase subunit A (445 aa).

This sequence belongs to the NqrA family. In terms of assembly, composed of six subunits; NqrA, NqrB, NqrC, NqrD, NqrE and NqrF.

The enzyme catalyses a ubiquinone + n Na(+)(in) + NADH + H(+) = a ubiquinol + n Na(+)(out) + NAD(+). Its function is as follows. NQR complex catalyzes the reduction of ubiquinone-1 to ubiquinol by two successive reactions, coupled with the transport of Na(+) ions from the cytoplasm to the periplasm. NqrA to NqrE are probably involved in the second step, the conversion of ubisemiquinone to ubiquinol. This Teredinibacter turnerae (strain ATCC 39867 / T7901) protein is Na(+)-translocating NADH-quinone reductase subunit A.